A 125-amino-acid polypeptide reads, in one-letter code: Large ribosomal subunit protein eL31 (125 aa).

It belongs to the eukaryotic ribosomal protein eL31 family. As to quaternary structure, component of the large ribosomal subunit.

It localises to the cytoplasm. Functionally, component of the large ribosomal subunit. The ribosome is a large ribonucleoprotein complex responsible for the synthesis of proteins in the cell. In Ictalurus punctatus (Channel catfish), this protein is Large ribosomal subunit protein eL31 (rpl31).